A 154-amino-acid chain; its full sequence is Ribosome maturation factor RimP (154 aa).

It belongs to the RimP family.

Its subcellular location is the cytoplasm. Required for maturation of 30S ribosomal subunits. The polypeptide is Ribosome maturation factor RimP (Haemophilus ducreyi (strain 35000HP / ATCC 700724)).